The following is a 272-amino-acid chain: Ethanolamine ammonia-lyase small subunit (272 aa).

The adenosylcob(III)alamin site is built by Val-161, Glu-182, and Cys-211.

This sequence belongs to the EutC family. As to quaternary structure, the basic unit is a heterodimer which dimerizes to form tetramers. The heterotetramers trimerize; 6 large subunits form a core ring with 6 small subunits projecting outwards. Requires adenosylcob(III)alamin as cofactor.

Its subcellular location is the bacterial microcompartment. The catalysed reaction is ethanolamine = acetaldehyde + NH4(+). It functions in the pathway amine and polyamine degradation; ethanolamine degradation. Functionally, catalyzes the deamination of various vicinal amino-alcohols to oxo compounds. Allows this organism to utilize ethanolamine as the sole source of nitrogen and carbon in the presence of external vitamin B12. This chain is Ethanolamine ammonia-lyase small subunit, found in Pseudomonas putida (strain GB-1).